Consider the following 156-residue polypeptide: ATP synthase subunit b (156 aa).

Residues 7–29 (LIGQLIAFALFTWFCVKFVWPPI) traverse the membrane as a helical segment.

It belongs to the ATPase B chain family. As to quaternary structure, F-type ATPases have 2 components, F(1) - the catalytic core - and F(0) - the membrane proton channel. F(1) has five subunits: alpha(3), beta(3), gamma(1), delta(1), epsilon(1). F(0) has three main subunits: a(1), b(2) and c(10-14). The alpha and beta chains form an alternating ring which encloses part of the gamma chain. F(1) is attached to F(0) by a central stalk formed by the gamma and epsilon chains, while a peripheral stalk is formed by the delta and b chains.

The protein localises to the cell inner membrane. Its function is as follows. F(1)F(0) ATP synthase produces ATP from ADP in the presence of a proton or sodium gradient. F-type ATPases consist of two structural domains, F(1) containing the extramembraneous catalytic core and F(0) containing the membrane proton channel, linked together by a central stalk and a peripheral stalk. During catalysis, ATP synthesis in the catalytic domain of F(1) is coupled via a rotary mechanism of the central stalk subunits to proton translocation. Component of the F(0) channel, it forms part of the peripheral stalk, linking F(1) to F(0). This is ATP synthase subunit b from Mannheimia succiniciproducens (strain KCTC 0769BP / MBEL55E).